The primary structure comprises 184 residues: Elongation factor P (184 aa).

It belongs to the elongation factor P family.

It is found in the cytoplasm. It participates in protein biosynthesis; polypeptide chain elongation. Its function is as follows. Involved in peptide bond synthesis. Stimulates efficient translation and peptide-bond synthesis on native or reconstituted 70S ribosomes in vitro. Probably functions indirectly by altering the affinity of the ribosome for aminoacyl-tRNA, thus increasing their reactivity as acceptors for peptidyl transferase. The sequence is that of Elongation factor P from Polaromonas naphthalenivorans (strain CJ2).